The chain runs to 404 residues: Spore development regulator RYP2 (404 aa).

Disordered stretches follow at residues 1–46 (MSAP…RKAV), 200–231 (LLKRPLNRAEPDYPAPPTQPRTPERSGASSQQ), and 382–404 (SGQSFSQSAGHMQSPSQVPPAWG). The Velvet domain maps to 17 to 194 (LQSADFRLTV…ADQGVKLRIR (178 aa)). Residues 29-46 (NPERARVAGGKEKERKAV) are compositionally biased toward basic and acidic residues. Residues 382–397 (SGQSFSQSAGHMQSPS) are compositionally biased toward polar residues.

The protein belongs to the velvet family. VosA subfamily. In terms of assembly, forms a heterodimeric complex with RYP3; the formation of the RYP2-RYP3 complex is light-dependent.

Its subcellular location is the nucleus. In terms of biological role, component of the RYP2-RYP3 heterodimeric complex that plays a dual role in activating genes associated with spore maturation and repressing certain development-associated genes. The complex binds DNA through the DNA-binding domain of vosA that recognizes an 11-nucleotide consensus sequence 5'-CTGGCCGCGGC-3' consisting of two motifs in the promoters of key developmental regulatory genes. Required for viable spore production and regulation of sporulation in response to temperature and for the switch to yeast-form in the presence of host cells. This chain is Spore development regulator RYP2, found in Ajellomyces capsulatus (Darling's disease fungus).